Here is a 339-residue protein sequence, read N- to C-terminus: HTH-type transcriptional regulator SyrM 2 (339 aa).

The HTH lysR-type domain occupies 32–89 (VDLNLLVELEALLQYRNITHAAQHVGRSQPAMSRALSRLRDMFNDDLLVRGSSGLVPT). Positions 49–68 (ITHAAQHVGRSQPAMSRALS) form a DNA-binding region, H-T-H motif.

The protein belongs to the LysR transcriptional regulatory family.

Functionally, acts in trans to stimulate nod gene expression. This is HTH-type transcriptional regulator SyrM 2 (syrM2) from Sinorhizobium fredii (strain NBRC 101917 / NGR234).